A 1042-amino-acid polypeptide reads, in one-letter code: Carbamoyl phosphate synthase large chain (1042 aa).

The interval 1 to 417 is carboxyphosphate synthetic domain; sequence MTEDSRTILL…SLLKALRSSE (417 aa). 12 residues coordinate ATP: R127, R182, G188, G189, E221, I223, E228, G254, I255, H256, Q297, and E314. Residues 131–343 form the ATP-grasp 1 domain; it reads RQRMADLGQP…IARVTAKVAL (213 aa). 3 residues coordinate Mg(2+): Q297, E314, and N316. Q297, E314, and N316 together coordinate Mn(2+). The oligomerization domain stretch occupies residues 418–558; that stretch reads YDPSVDWATV…SQGSTGSDVR (141 aa). A carbamoyl phosphate synthetic domain region spans residues 559–947; the sequence is ADRDAHSVVI…WKAQVAASNA (389 aa). In terms of domain architecture, ATP-grasp 2 spans 689-880; the sequence is NRLLDERDIS…IAKLAAKVMA (192 aa). Residues R725, E764, L766, E771, G796, V797, H798, S799, Q839, and E851 each coordinate ATP. Residues Q839, E851, and N853 each coordinate Mg(2+). The Mn(2+) site is built by Q839, E851, and N853. One can recognise an MGS-like domain in the interval 947–1042; that stretch reads APVPGSTAVV…DRPVNDETWG (96 aa). The interval 948–1042 is allosteric domain; the sequence is PVPGSTAVVD…DRPVNDETWG (95 aa).

Belongs to the CarB family. Composed of two chains; the small (or glutamine) chain promotes the hydrolysis of glutamine to ammonia, which is used by the large (or ammonia) chain to synthesize carbamoyl phosphate. Tetramer of heterodimers (alpha,beta)4. It depends on Mg(2+) as a cofactor. Requires Mn(2+) as cofactor.

The catalysed reaction is hydrogencarbonate + L-glutamine + 2 ATP + H2O = carbamoyl phosphate + L-glutamate + 2 ADP + phosphate + 2 H(+). It carries out the reaction hydrogencarbonate + NH4(+) + 2 ATP = carbamoyl phosphate + 2 ADP + phosphate + 2 H(+). Its pathway is amino-acid biosynthesis; L-arginine biosynthesis; carbamoyl phosphate from bicarbonate: step 1/1. The protein operates within pyrimidine metabolism; UMP biosynthesis via de novo pathway; (S)-dihydroorotate from bicarbonate: step 1/3. Functionally, large subunit of the glutamine-dependent carbamoyl phosphate synthetase (CPSase). CPSase catalyzes the formation of carbamoyl phosphate from the ammonia moiety of glutamine, carbonate, and phosphate donated by ATP, constituting the first step of 2 biosynthetic pathways, one leading to arginine and/or urea and the other to pyrimidine nucleotides. The large subunit (synthetase) binds the substrates ammonia (free or transferred from glutamine from the small subunit), hydrogencarbonate and ATP and carries out an ATP-coupled ligase reaction, activating hydrogencarbonate by forming carboxy phosphate which reacts with ammonia to form carbamoyl phosphate. This is Carbamoyl phosphate synthase large chain from Halobacterium salinarum (strain ATCC 700922 / JCM 11081 / NRC-1) (Halobacterium halobium).